We begin with the raw amino-acid sequence, 547 residues long: Mitogen-activated protein kinase 15 (547 aa).

The ubiquitin-conjugating stretch occupies residues 1–20; it reads MCAAEVDRHVSQRYLIKRRL. The Protein kinase domain maps to 14–305; it reads YLIKRRLGKG…AEQALQHPYV (292 aa). Residues 20–28 and lysine 43 each bind ATP; that span reads LGKGAYGIV. Aspartate 138 acts as the Proton acceptor in catalysis. Threonine 176 carries the post-translational modification Phosphothreonine. Residues 176–178 carry the TXY motif; the sequence is TEY. Tyrosine 178 carries the post-translational modification Phosphotyrosine. The tract at residues 266–286 is necessary to interact with ESRRA, to regulate its subcellular localization and to inhibit its transcriptional activity; the sequence is LDALLPPDTPPEALDLLKRLL. The requires for interaction with GABARAP, MAP1LC3B AND GABARAPL1 stretch occupies residues 301-380; the sequence is QHPYVQRFHC…SQRQSLKPGV (80 aa). The segment at 370-503 is disordered; sequence ASQRQSLKPG…EAPEPRPGRR (134 aa). 2 PXXXP motif repeats span residues 378-382 and 385-389; these read PGVLP and LAETP. PXXXP motif; regulates binding with chromatin and interaction with PCNA repeat units follow at residues 393–397 and 401–405; these read RGPKP and HGHDP. Residues 401-414 show a composition bias toward basic and acidic residues; sequence HGHDPEHVEVRRQS. Arginine 449 is modified (omega-N-methylarginine). A compositionally biased stretch (polar residues) spans 454-465; sequence SLTSQAAAQAAN. Positions 481–490 are enriched in low complexity; sequence AVGARRVPSR. Residues 491 to 500 show a composition bias toward basic and acidic residues; sequence LPREAPEPRP.

The protein belongs to the protein kinase superfamily. CMGC Ser/Thr protein kinase family. MAP kinase subfamily. Interacts with CSK/c-Src, ABL1, RET and TGFB1I1. Interacts with GABARAP, MAP1LC3B and GABARAPL1; controls, in a kinase-dependent fashion, both basal and starvation-induced autophagy. Interacts with ESRRA; promotes re-localization of ESRRA to the cytoplasm through a XPO1-dependent mechanism then inhibits ESRRA transcriptional activity. Interacts with PCNA; the interaction is chromatin binding- and kinase activity-dependent and prevents MDM2-mediated PCNA destruction by inhibiting the association of PCNA with MDM2. Interacts with DVL2. Interacts with CLIC3; MAPK15 does not phosphorylates CLIC3. Autophosphorylated on Thr-176 and Tyr-178; activates the enzyme. Post-translationally, dephosphorylated by PTPN1. In terms of processing, ubiquitinated. Ubiquitination may allow its tight kinase activity regulation and rapid turnover. May be ubiquitinated by a SCF E3 ligase. Ubiquitously expressed at a weak level. Highest expression is found in testis and to a lower extent in lung.

It is found in the cytoplasm. The protein resides in the cytoskeleton. Its subcellular location is the cilium basal body. The protein localises to the cell junction. It localises to the tight junction. It is found in the microtubule organizing center. The protein resides in the centrosome. Its subcellular location is the centriole. The protein localises to the cytoplasmic vesicle. It localises to the autophagosome. It is found in the golgi apparatus. The protein resides in the nucleus. Its subcellular location is the spindle. The catalysed reaction is L-seryl-[protein] + ATP = O-phospho-L-seryl-[protein] + ADP + H(+). It carries out the reaction L-threonyl-[protein] + ATP = O-phospho-L-threonyl-[protein] + ADP + H(+). Activated by threonine and tyrosine phosphorylation. Inhibited by dual specificity phosphatases, such as DUSP1. Phosphorylation and activation in response to DNA damaging agents, serum stimulation. Constitutively activated when phosphorylated on Tyr-178. Activity depends on the relative rates of MAPK15 autophosphorylation and dephosphorylation by PTPN1. Functionally, atypical MAPK protein that regulates several process such as autophagy, ciliogenesis, protein trafficking/secretion and genome integrity, in a kinase activity-dependent manner. Controls both, basal and starvation-induced autophagy throught its interaction with GABARAP, MAP1LC3B and GABARAPL1 leading to autophagosome formation, SQSTM1 degradation and reduced MAP1LC3B inhibitory phosphorylation. Regulates primary cilium formation and the localization of ciliary proteins involved in cilium structure, transport, and signaling. Prevents the relocation of the sugar-adding enzymes from the Golgi to the endoplasmic reticulum, thereby restricting the production of sugar-coated proteins. Upon amino-acid starvation, mediates transitional endoplasmic reticulum site disassembly and inhibition of secretion. Binds to chromatin leading to MAPK15 activation and interaction with PCNA, that which protects genomic integrity by inhibiting MDM2-mediated degradation of PCNA. Regulates DA transporter (DAT) activity and protein expression via activation of RhoA. In response to H(2)O(2) treatment phosphorylates ELAVL1, thus preventing it from binding to the PDCD4 3'UTR and rendering the PDCD4 mRNA accessible to miR-21 and leading to its degradation and loss of protein expression. Also functions in a kinase activity-independent manner as a negative regulator of growth. Phosphorylates in vitro FOS and MBP. During oocyte maturation, plays a key role in the microtubule organization and mei- otic cell cycle progression in oocytes, fertilized eggs, and early embryos. Interacts with ESRRA promoting its re-localization from the nucleus to the cytoplasm and then prevents its transcriptional activity. This Rattus norvegicus (Rat) protein is Mitogen-activated protein kinase 15 (Mapk15).